The sequence spans 469 residues: 3-isopropylmalate dehydratase large subunit (469 aa).

The [4Fe-4S] cluster site is built by cysteine 347, cysteine 410, and cysteine 413.

It belongs to the aconitase/IPM isomerase family. LeuC type 1 subfamily. As to quaternary structure, heterodimer of LeuC and LeuD. [4Fe-4S] cluster serves as cofactor.

The enzyme catalyses (2R,3S)-3-isopropylmalate = (2S)-2-isopropylmalate. It functions in the pathway amino-acid biosynthesis; L-leucine biosynthesis; L-leucine from 3-methyl-2-oxobutanoate: step 2/4. Catalyzes the isomerization between 2-isopropylmalate and 3-isopropylmalate, via the formation of 2-isopropylmaleate. This is 3-isopropylmalate dehydratase large subunit from Burkholderia lata (strain ATCC 17760 / DSM 23089 / LMG 22485 / NCIMB 9086 / R18194 / 383).